Here is a 147-residue protein sequence, read N- to C-terminus: Transcriptional regulator MraZ (147 aa).

2 consecutive SpoVT-AbrB domains span residues 5–52 (NHPT…PMEE) and 81–124 (GQVV…NAEH).

The protein belongs to the MraZ family. As to quaternary structure, forms oligomers.

It localises to the cytoplasm. It is found in the nucleoid. The chain is Transcriptional regulator MraZ from Koribacter versatilis (strain Ellin345).